Here is a 248-residue protein sequence, read N- to C-terminus: PF03932 family protein CutC (248 aa).

Belongs to the CutC family. As to quaternary structure, homodimer.

The protein resides in the cytoplasm. This chain is PF03932 family protein CutC, found in Escherichia coli O157:H7.